The sequence spans 639 residues: 1-deoxy-D-xylulose-5-phosphate synthase (639 aa).

Thiamine diphosphate contacts are provided by residues His-76 and 117–119; that span reads AHS. Mg(2+) is bound at residue Asp-148. Thiamine diphosphate is bound by residues 149 to 150, Asn-181, Tyr-288, and Glu-370; that span reads GS. Residue Asn-181 coordinates Mg(2+).

The protein belongs to the transketolase family. DXPS subfamily. In terms of assembly, homodimer. Mg(2+) is required as a cofactor. Thiamine diphosphate serves as cofactor.

It catalyses the reaction D-glyceraldehyde 3-phosphate + pyruvate + H(+) = 1-deoxy-D-xylulose 5-phosphate + CO2. Its pathway is metabolic intermediate biosynthesis; 1-deoxy-D-xylulose 5-phosphate biosynthesis; 1-deoxy-D-xylulose 5-phosphate from D-glyceraldehyde 3-phosphate and pyruvate: step 1/1. Functionally, catalyzes the acyloin condensation reaction between C atoms 2 and 3 of pyruvate and glyceraldehyde 3-phosphate to yield 1-deoxy-D-xylulose-5-phosphate (DXP). The chain is 1-deoxy-D-xylulose-5-phosphate synthase from Leptothrix cholodnii (strain ATCC 51168 / LMG 8142 / SP-6) (Leptothrix discophora (strain SP-6)).